Consider the following 1526-residue polypeptide: DNA topoisomerase 2-alpha (1526 aa).

Methionine 1 is subject to N-acetylmethionine. A disordered region spans residues 1 to 21; the sequence is MELSPLQPVNENMQMNKKKNE. At serine 4 the chain carries Phosphoserine. Lysine 17 participates in a covalent cross-link: Glycyl lysine isopeptide (Lys-Gly) (interchain with G-Cter in SUMO2). Residues asparagine 90, asparagine 119, and 147–149 contribute to the ATP site; that span reads SSN. Glycyl lysine isopeptide (Lys-Gly) (interchain with G-Cter in SUMO2) cross-links involve residues lysine 155 and lysine 156. 160–167 contributes to the ATP binding site; it reads GRNGYGAK. Residue lysine 260 forms a Glycyl lysine isopeptide (Lys-Gly) (interchain with G-Cter in SUMO2) linkage. The residue at position 281 (threonine 281) is a Phosphothreonine. The interval 341 to 343 is interaction with DNA; sequence KKK. Residue lysine 351 forms a Glycyl lysine isopeptide (Lys-Gly) (interchain with G-Cter in SUMO2) linkage. 375-377 is a binding site for ATP; it reads QTK. Residues lysine 385, lysine 396, lysine 415, lysine 417, lysine 424, and lysine 439 each participate in a glycyl lysine isopeptide (Lys-Gly) (interchain with G-Cter in SUMO2) cross-link. Residues 454 to 571 enclose the Toprim domain; that stretch reads CTLILTEGDS…SLLRHRFLEE (118 aa). A Mg(2+)-binding site is contributed by glutamate 460. Residues lysine 465, lysine 479, and lysine 528 each participate in a glycyl lysine isopeptide (Lys-Gly) (interchain with G-Cter in SUMO2) cross-link. Mg(2+)-binding residues include aspartate 540 and aspartate 542. Glycyl lysine isopeptide (Lys-Gly) (interchain with G-Cter in SUMO2) cross-links involve residues lysine 583, lysine 598, lysine 613, lysine 621, lysine 624, lysine 631, lysine 638, lysine 654, lysine 661, and lysine 675. A Topo IIA-type catalytic domain is found at 714–1166; the sequence is IPSMVDGLKP…SPSDLWKEDL (453 aa). Tyrosine 804 (O-(5'-phospho-DNA)-tyrosine intermediate) is an active-site residue. The tract at residues 989-998 is interaction with DNA; it reads KLQTSLTCNS. Residue lysine 1074 forms a Glycyl lysine isopeptide (Lys-Gly) (interchain with G-Cter in SUMO2) linkage. Disordered stretches follow at residues 1089 to 1117 and 1180 to 1217; these read WKEA…AESG and EKQD…VIPQ. Residues 1098–1109 are compositionally biased toward acidic residues; that stretch reads DEEENEESDNEN. Position 1105 is a phosphoserine; by CK1 (serine 1105). Residues lysine 1191 and lysine 1199 each participate in a glycyl lysine isopeptide (Lys-Gly) (interchain with G-Cter in SUMO2) cross-link. Position 1208 is a phosphoserine (serine 1208). A Glycyl lysine isopeptide (Lys-Gly) (interchain with G-Cter in SUMO2) cross-link involves residue lysine 1223. A disordered region spans residues 1233-1526; sequence KIKSENVEGT…LEESDDDDLF (294 aa). Lysine 1235 participates in a covalent cross-link: Glycyl lysine isopeptide (Lys-Gly) (interchain with G-Cter in SUMO1); alternate. Residue lysine 1235 forms a Glycyl lysine isopeptide (Lys-Gly) (interchain with G-Cter in SUMO2); alternate linkage. Threonine 1242 is modified (phosphothreonine). Lysine 1254 is covalently cross-linked (Glycyl lysine isopeptide (Lys-Gly) (interchain with G-Cter in SUMO2)). Residues 1255 to 1265 are compositionally biased toward basic and acidic residues; it reads QRIEKKQKKEP. Residues lysine 1271, lysine 1278, and lysine 1281 each participate in a glycyl lysine isopeptide (Lys-Gly) (interchain with G-Cter in SUMO2) cross-link. 4 positions are modified to phosphoserine: serine 1290, serine 1292, serine 1294, and serine 1297. Position 1322 is a phosphothreonine (threonine 1322). Acidic residues predominate over residues 1325-1344; it reads LDSDEDFSGSDGKDEDEDFF. Phosphoserine occurs at positions 1327 and 1332. At threonine 1349 the chain carries Phosphothreonine. Residues lysine 1358, lysine 1362, and lysine 1368 each participate in a glycyl lysine isopeptide (Lys-Gly) (interchain with G-Cter in SUMO2) cross-link. Residues serine 1369 and serine 1372 each carry the phosphoserine modification. Lysine 1380 is covalently cross-linked (Glycyl lysine isopeptide (Lys-Gly) (interchain with G-Cter in SUMO2)). Phosphoserine is present on residues serine 1382 and serine 1386. Residues 1405 to 1426 show a composition bias toward low complexity; it reads SKQTVAVKKTATKSQSSTSTAG. Lysine 1417 participates in a covalent cross-link: Glycyl lysine isopeptide (Lys-Gly) (interchain with G-Cter in SUMO2); alternate. Lysine 1417 is modified (N6-acetyllysine; alternate). An interaction with PLSCR1 region spans residues 1428 to 1434; it reads KKRAVPK. Lysine 1437 participates in a covalent cross-link: Glycyl lysine isopeptide (Lys-Gly) (interchain with G-Cter in SUMO2); alternate. Residue lysine 1437 is modified to N6-acetyllysine; alternate. Glycyl lysine isopeptide (Lys-Gly) (interchain with G-Cter in SUMO2) cross-links involve residues lysine 1449 and lysine 1454. Phosphoserine is present on residues serine 1464, serine 1466, serine 1469, and serine 1471. Residues lysine 1479 and lysine 1487 each participate in a glycyl lysine isopeptide (Lys-Gly) (interchain with G-Cter in SUMO2) cross-link. Residues 1486–1497 show a composition bias toward basic and acidic residues; the sequence is SKGENQDFRVDL. A Phosphoserine modification is found at serine 1520.

It belongs to the type II topoisomerase family. As to quaternary structure, homodimer. Interacts with COPS5. Interacts with RECQL5; this stimulates DNA decatenation. Interacts with SETMAR; stimulates the topoisomerase activity. Interacts with DHX9; this interaction occurs in a E2 enzyme UBE2I- and RNA-dependent manner, negatively regulates DHX9-mediated double-stranded DNA and RNA duplex helicase activity and stimulates TOP2A-mediated supercoiled DNA relaxation activity. Interacts with HNRNPU (via C-terminus); this interaction protects the topoisomerase TOP2A from degradation and positively regulates the relaxation of supercoiled DNA in a RNA-dependent manner. Interacts with MCM3AP. Interacts with ERCC6. Interacts with PLSCR1. Interacts with GCNA; this interaction allows the resolution of topoisomerase II (TOP2A) DNA-protein cross-links. Interacts with POL1RA/RPA1 (via dock II) and UBTF in the context of Pol I complex; may assist Pol I transcription initiation by releasing supercoils occurring during DNA unwinding. Interacts with TPRN; TPRN interacts with a number of DNA damage response proteins, is recruited to sites of DNA damage and may play a role in DNA damage repair. The cofactor is Mg(2+). Requires Mn(2+) as cofactor. Ca(2+) serves as cofactor. Post-translationally, phosphorylation has no effect on catalytic activity. However, phosphorylation at Ser-1105 by CSNK1D/CK1 promotes DNA cleavable complex formation.

It is found in the cytoplasm. It localises to the nucleus. The protein resides in the nucleoplasm. Its subcellular location is the nucleolus. It carries out the reaction ATP-dependent breakage, passage and rejoining of double-stranded DNA.. Functionally, key decatenating enzyme that alters DNA topology by binding to two double-stranded DNA molecules, generating a double-stranded break in one of the strands, passing the intact strand through the broken strand, and religating the broken strand. May play a role in regulating the period length of BMAL1 transcriptional oscillation. The sequence is that of DNA topoisomerase 2-alpha (TOP2A) from Cricetulus griseus (Chinese hamster).